The chain runs to 227 residues: Putative molybdenum transport system permease protein YvgM (227 aa).

5 consecutive transmembrane segments (helical) span residues 17 to 37, 57 to 77, 94 to 114, 142 to 162, and 201 to 221; these read VVLS…LGTL, FMLP…VIFG, VIFT…PLMY, VFIH…SILS, and TLAW…LFFI. The ABC transmembrane type-1 domain maps to 17–221; the sequence is VVLSFQVAAV…VISFLMLFFI (205 aa).

It belongs to the binding-protein-dependent transport system permease family. CysTW subfamily.

It localises to the cell membrane. Its function is as follows. could be part of the binding-protein-dependent transport system for molybdenum; probably responsible for the translocation of the substrate across the membrane. In Bacillus subtilis (strain 168), this protein is Putative molybdenum transport system permease protein YvgM (yvgM).